Consider the following 122-residue polypeptide: Small ribosomal subunit protein uS13 (122 aa).

The tract at residues 93-122 (RKGLPVRGQTTKNNARTRKGKRKTVGSASK) is disordered. A compositionally biased stretch (basic residues) spans 107 to 116 (ARTRKGKRKT).

Belongs to the universal ribosomal protein uS13 family. Part of the 30S ribosomal subunit. Forms a loose heterodimer with protein S19. Forms two bridges to the 50S subunit in the 70S ribosome.

Functionally, located at the top of the head of the 30S subunit, it contacts several helices of the 16S rRNA. In the 70S ribosome it contacts the 23S rRNA (bridge B1a) and protein L5 of the 50S subunit (bridge B1b), connecting the 2 subunits; these bridges are implicated in subunit movement. Contacts the tRNAs in the A and P-sites. This chain is Small ribosomal subunit protein uS13, found in Wolinella succinogenes (strain ATCC 29543 / DSM 1740 / CCUG 13145 / JCM 31913 / LMG 7466 / NCTC 11488 / FDC 602W) (Vibrio succinogenes).